A 904-amino-acid polypeptide reads, in one-letter code: Dual specificity tyrosine-phosphorylation-regulated kinase mbk-1 (904 aa).

Disordered regions lie at residues Met-1 to Glu-151, Thr-250 to Ser-272, and Ala-285 to Gly-345. The span at Asn-9–Asn-23 shows a compositional bias: polar residues. The span at Thr-24–Ile-35 shows a compositional bias: low complexity. The segment covering Glu-59–Gln-75 has biased composition (basic and acidic residues). The segment covering Asn-112 to Gln-123 has biased composition (low complexity). Positions Val-286–His-297 are enriched in polar residues. A Protein kinase domain is found at Ile-367–Tyr-690. Residues Val-373–Val-381 and Lys-396 contribute to the ATP site. Residue Asp-495 is the Proton acceptor of the active site. Disordered regions lie at residues Tyr-717–Glu-830 and Met-881–Leu-904. The segment covering Pro-721–Phe-733 has biased composition (polar residues). A compositionally biased stretch (low complexity) spans Ser-749–Arg-820. The span at Met-881–Ser-890 shows a compositional bias: polar residues. A compositionally biased stretch (basic and acidic residues) spans Arg-892–Leu-904.

The protein belongs to the protein kinase superfamily. CMGC Ser/Thr protein kinase family. MNB/DYRK subfamily. The cofactor is Mg(2+).

It localises to the nucleus. The enzyme catalyses L-seryl-[protein] + ATP = O-phospho-L-seryl-[protein] + ADP + H(+). The catalysed reaction is L-threonyl-[protein] + ATP = O-phospho-L-threonyl-[protein] + ADP + H(+). It carries out the reaction L-tyrosyl-[protein] + ATP = O-phospho-L-tyrosyl-[protein] + ADP + H(+). In terms of biological role, possible role in the function of olfactory neurons. This is Dual specificity tyrosine-phosphorylation-regulated kinase mbk-1 from Caenorhabditis briggsae.